Reading from the N-terminus, the 84-residue chain is MLVLARRTNESIMIGDDIEIVIVDIKGDQVKIGVKAPRNVSVHRAEVYKDIQEENRKAAETKIKPEDLGKIGDILKKKDSGKKG.

The protein belongs to the CsrA/RsmA family. As to quaternary structure, homodimer; the beta-strands of each monomer intercalate to form a hydrophobic core, while the alpha-helices form wings that extend away from the core.

Its subcellular location is the cytoplasm. In terms of biological role, a translational regulator that binds mRNA to regulate translation initiation and/or mRNA stability. Usually binds in the 5'-UTR at or near the Shine-Dalgarno sequence preventing ribosome-binding, thus repressing translation. Its main target seems to be the major flagellin gene, while its function is anatagonized by FliW. The protein is Translational regulator CsrA of Leptospira borgpetersenii serovar Hardjo-bovis (strain JB197).